Here is a 319-residue protein sequence, read N- to C-terminus: tRNA uridine(34) hydroxylase (319 aa).

Residues 127–221 enclose the Rhodanese domain; it reads KQEDTVIIDA…YGKDPEVQGE (95 aa). Residue C181 is the Cysteine persulfide intermediate of the active site.

It belongs to the TrhO family.

The enzyme catalyses uridine(34) in tRNA + AH2 + O2 = 5-hydroxyuridine(34) in tRNA + A + H2O. Catalyzes oxygen-dependent 5-hydroxyuridine (ho5U) modification at position 34 in tRNAs. The sequence is that of tRNA uridine(34) hydroxylase from Bacillus cereus (strain G9842).